Here is a 321-residue protein sequence, read N- to C-terminus: Putative sulfotransferase vep-2 (321 aa).

Residues 11–31 traverse the membrane as a helical segment; sequence IARVLIIIASISVICITLFIS.

This sequence to C.elegans C41C4.1 and C18B2.2.

The protein localises to the membrane. This is Putative sulfotransferase vep-2 from Caenorhabditis elegans.